A 68-amino-acid polypeptide reads, in one-letter code: ATP synthase F(0) complex subunit 8 (68 aa).

A helical membrane pass occupies residues 8 to 24 (TWFTTILSMFLTLFIIF). Residue K54 is modified to N6-acetyllysine; alternate. Position 54 is an N6-succinyllysine; alternate (K54). N6-acetyllysine is present on K57.

This sequence belongs to the ATPase protein 8 family. In terms of assembly, component of the ATP synthase complex composed at least of ATP5F1A/subunit alpha, ATP5F1B/subunit beta, ATP5MC1/subunit c (homooctomer), MT-ATP6/subunit a, MT-ATP8/subunit 8, ATP5ME/subunit e, ATP5MF/subunit f, ATP5MG/subunit g, ATP5MK/subunit k, ATP5MJ/subunit j, ATP5F1C/subunit gamma, ATP5F1D/subunit delta, ATP5F1E/subunit epsilon, ATP5PF/subunit F6, ATP5PB/subunit b, ATP5PD/subunit d, ATP5PO/subunit OSCP. ATP synthase complex consists of a soluble F(1) head domain (subunits alpha(3) and beta(3)) - the catalytic core - and a membrane F(0) domain - the membrane proton channel (subunits c, a, 8, e, f, g, k and j). These two domains are linked by a central stalk (subunits gamma, delta, and epsilon) rotating inside the F1 region and a stationary peripheral stalk (subunits F6, b, d, and OSCP). Interacts with PRICKLE3.

It is found in the mitochondrion membrane. Functionally, subunit 8, of the mitochondrial membrane ATP synthase complex (F(1)F(0) ATP synthase or Complex V) that produces ATP from ADP in the presence of a proton gradient across the membrane which is generated by electron transport complexes of the respiratory chain. ATP synthase complex consist of a soluble F(1) head domain - the catalytic core - and a membrane F(1) domain - the membrane proton channel. These two domains are linked by a central stalk rotating inside the F(1) region and a stationary peripheral stalk. During catalysis, ATP synthesis in the catalytic domain of F(1) is coupled via a rotary mechanism of the central stalk subunits to proton translocation. In vivo, can only synthesize ATP although its ATP hydrolase activity can be activated artificially in vitro. Part of the complex F(0) domain. This is ATP synthase F(0) complex subunit 8 from Hippopotamus amphibius (Hippopotamus).